The sequence spans 232 residues: Cytidylate kinase (232 aa).

The interval methionine 1–serine 21 is disordered. Position 13 to 21 (glycine 13 to serine 21) interacts with ATP.

Belongs to the cytidylate kinase family. Type 1 subfamily.

The protein localises to the cytoplasm. It catalyses the reaction CMP + ATP = CDP + ADP. The catalysed reaction is dCMP + ATP = dCDP + ADP. In Nocardia farcinica (strain IFM 10152), this protein is Cytidylate kinase.